The following is a 213-amino-acid chain: 5''-phosphoribostamycin phosphatase (213 aa).

His-8 functions as the Tele-phosphohistidine intermediate in the catalytic mechanism. The active site involves His-155.

This sequence belongs to the histidine phosphatase superfamily.

The enzyme catalyses 5''-phosphoribostamycin + H2O = ribostamycin + phosphate. Its pathway is antibiotic biosynthesis; butirosin biosynthesis. Catalyzes dephosphorylation of 5''-phosphoribostamycin to generate ribostamycinin the biosynthetic pathway of butirosin. This Niallia circulans (Bacillus circulans) protein is 5''-phosphoribostamycin phosphatase (btrP).